The sequence spans 311 residues: Formimidoylglutamase (311 aa).

Residues His-130, Asp-155, His-157, Asp-159, Cys-242, and Asp-244 each contribute to the Mn(2+) site.

The protein belongs to the arginase family. Mn(2+) serves as cofactor.

It carries out the reaction N-formimidoyl-L-glutamate + H2O = formamide + L-glutamate. Its pathway is amino-acid degradation; L-histidine degradation into L-glutamate; L-glutamate from N-formimidoyl-L-glutamate (hydrolase route): step 1/1. Its function is as follows. Catalyzes the conversion of N-formimidoyl-L-glutamate to L-glutamate and formamide. In Staphylococcus epidermidis (strain ATCC 35984 / DSM 28319 / BCRC 17069 / CCUG 31568 / BM 3577 / RP62A), this protein is Formimidoylglutamase.